The primary structure comprises 307 residues: Methionyl-tRNA formyltransferase (307 aa).

(6S)-5,6,7,8-tetrahydrofolate is bound at residue Ser-108–Pro-111.

It belongs to the Fmt family.

It catalyses the reaction L-methionyl-tRNA(fMet) + (6R)-10-formyltetrahydrofolate = N-formyl-L-methionyl-tRNA(fMet) + (6S)-5,6,7,8-tetrahydrofolate + H(+). Its function is as follows. Attaches a formyl group to the free amino group of methionyl-tRNA(fMet). The formyl group appears to play a dual role in the initiator identity of N-formylmethionyl-tRNA by promoting its recognition by IF2 and preventing the misappropriation of this tRNA by the elongation apparatus. This Xylella fastidiosa (strain M12) protein is Methionyl-tRNA formyltransferase.